A 139-amino-acid polypeptide reads, in one-letter code: Large ribosomal subunit protein uL22 (139 aa).

The interval 1–21 (MTAPEQTYRNKKQRKQQHKLR) is disordered. A compositionally biased stretch (basic residues) spans 9–21 (RNKKQRKQQHKLR).

The protein belongs to the universal ribosomal protein uL22 family. Part of the 50S ribosomal subunit.

Functionally, this protein binds specifically to 23S rRNA; its binding is stimulated by other ribosomal proteins, e.g. L4, L17, and L20. It is important during the early stages of 50S assembly. It makes multiple contacts with different domains of the 23S rRNA in the assembled 50S subunit and ribosome. Its function is as follows. The globular domain of the protein is located near the polypeptide exit tunnel on the outside of the subunit, while an extended beta-hairpin is found that lines the wall of the exit tunnel in the center of the 70S ribosome. In Deinococcus geothermalis (strain DSM 11300 / CIP 105573 / AG-3a), this protein is Large ribosomal subunit protein uL22.